The primary structure comprises 423 residues: G2/mitotic-specific cyclin-B1 (423 aa).

S116 carries the post-translational modification Phosphoserine; by CDK1. Phosphoserine is present on S118. S123 bears the Phosphoserine; by PLK1 mark. Residue S137 is modified to Phosphoserine. 2 interaction with CDK2 regions span residues E159–Y167 and Y248–M251. T311 is subject to Phosphothreonine.

It belongs to the cyclin family. Cyclin AB subfamily. In terms of assembly, interacts with the CDC2 protein kinase to form a serine/threonine kinase holoenzyme complex also known as maturation promoting factor (MPF). The cyclin subunit imparts substrate specificity to the complex. Binds HEI10. Interacts with catalytically active RALBP1 and CDC2 during mitosis to form an endocytotic complex during interphase. Interacts with CCNF; interaction is required for nuclear localization. Interacts with CDK5RAP3. Interacts with RFPL4A and UBE2A. Interacts with INCA1. Post-translationally, ubiquitinated by the SCF(NIPA) complex during interphase, leading to its destruction. Deubiquitinated by USP22 during G2/M phase. Phosphorylated by PLK1 at Ser-123 on centrosomes during prophase: phosphorylation by PLK1 does not cause nuclear import. Phosphorylation at Ser-137 was also reported to be mediated by PLK1 but Ser-123 seems to be the primary phosphorylation site.

Its subcellular location is the cytoplasm. It is found in the nucleus. The protein localises to the cytoskeleton. The protein resides in the microtubule organizing center. It localises to the centrosome. Its function is as follows. Essential for the control of the cell cycle at the G2/M (mitosis) transition. This Rattus norvegicus (Rat) protein is G2/mitotic-specific cyclin-B1 (Ccnb1).